The primary structure comprises 207 residues: GTP cyclohydrolase 1 (207 aa).

The Zn(2+) site is built by C94, H97, and C167.

Belongs to the GTP cyclohydrolase I family. Toroid-shaped homodecamer, composed of two pentamers of five dimers.

It catalyses the reaction GTP + H2O = 7,8-dihydroneopterin 3'-triphosphate + formate + H(+). The protein operates within cofactor biosynthesis; 7,8-dihydroneopterin triphosphate biosynthesis; 7,8-dihydroneopterin triphosphate from GTP: step 1/1. This chain is GTP cyclohydrolase 1, found in Thermobifida fusca (strain YX).